Reading from the N-terminus, the 921-residue chain is Collagen alpha-1(IX) chain (921 aa).

The N-terminal stretch at 1–23 is a signal peptide; it reads MKTCWKIPVFFFVCSFLEPWASA. Residues 24 to 268 form a nonhelical region (NC4) region; sequence AVKRRPRFPV…ITPSQTTDER (245 aa). Intrachain disulfides connect cysteine 44-cysteine 242 and cysteine 198-cysteine 252. The region spanning 50–244 is the Laminin G-like domain; it reads GQDDLPGFDL…LQWMLIHCDP (195 aa). An N-linked (GlcNAc...) asparagine glycan is attached at asparagine 171. The Zn(2+) site is built by aspartate 213, aspartate 215, and histidine 253. 2 disordered regions span residues 254–759 and 783–905; these read ELPA…APTD and RPDS…EPAS. 8 Collagen-like domains span residues 269–324, 325–356, 358–403, 416–472, 473–516, 587–643, 655–712, and 713–755; these read GPPG…TPGA, DGLT…GFPG, GIPG…GTIG, PPGR…GLRG, ITGI…AGPK, EKGS…GKLG, GPPG…GEPG, and LRGP…PPGR. Positions 269 to 405 are triple-helical region (COL3); sequence GPPGEQGPPG…PGPRGTIGFH (137 aa). Pro residues-rich tracts occupy residues 273-285 and 298-307; these read EQGP…PPGV and KGPPGPPGPA. Low complexity predominate over residues 368–383; sequence TAGLPGELGRVGPVGD. Pro residues predominate over residues 387–398; the sequence is RGPPGPPGPPGP. A nonhelical region (NC3) region spans residues 406–417; it reads DGDPLCPNACPP. Residues 418 to 756 form a triple-helical region (COL2) region; the sequence is GRSGYPGLPG…PGVQGPPGRA (339 aa). Residues 479–489 are compositionally biased toward basic and acidic residues; that stretch reads DKGEKGARGLD. 2 stretches are compositionally biased toward low complexity: residues 602–621 and 630–650; these read NSGK…RGPQ and LGPV…SPGL. The segment at 757-786 is nonhelical region (NC2); it reads PTDQHIKQVCMRVIQEHFAEMAASLKRPDS. Residues 787 to 901 form a triple-helical region (COL1) region; it reads GATGLPGRPG…PGPPGLPGFC (115 aa). Collagen-like domains follow at residues 790-847 and 848-899; these read GLPG…GPPG and RGPN…GLPG. Over residues 794 to 804 the composition is skewed to pro residues; sequence RPGPPGPPGPP. The segment covering 833 to 845 has biased composition (basic and acidic residues); the sequence is PKGDLGEKGERGP. Positions 888-897 are enriched in pro residues; it reads VPGPPGPPGL. The tract at residues 902–921 is nonhelical region (NC1); the sequence is EPASCTMQAGQRAFNKGPDP.

The protein belongs to the fibril-associated collagens with interrupted helices (FACIT) family. In terms of assembly, heterotrimer of an alpha 1(IX), an alpha 2(IX) and an alpha 3(IX) chain. In terms of processing, covalently linked to the telopeptides of type II collagen by lysine-derived cross-links. Post-translationally, prolines at the third position of the tripeptide repeating unit (G-X-Y) are hydroxylated in some or all of the chains.

It localises to the secreted. The protein resides in the extracellular space. Its subcellular location is the extracellular matrix. Its function is as follows. Structural component of hyaline cartilage and vitreous of the eye. This is Collagen alpha-1(IX) chain (COL9A1) from Homo sapiens (Human).